Here is a 364-residue protein sequence, read N- to C-terminus: DNA primase large subunit PriL (364 aa).

4 residues coordinate [4Fe-4S] cluster: Cys-237, Cys-309, Cys-318, and Cys-325. The segment at 345–364 is disordered; that stretch reads MQNDNEKGHEEKKEGETPPQ.

The protein belongs to the eukaryotic-type primase large subunit family. As to quaternary structure, heterodimer of a small subunit (PriS) and a large subunit (PriL). [4Fe-4S] cluster is required as a cofactor.

Regulatory subunit of DNA primase, an RNA polymerase that catalyzes the synthesis of short RNA molecules used as primers for DNA polymerase during DNA replication. Stabilizes and modulates the activity of the small subunit, increasing the rate of DNA synthesis, and conferring RNA synthesis capability. The DNA polymerase activity may enable DNA primase to also catalyze primer extension after primer synthesis. May also play a role in DNA repair. This is DNA primase large subunit PriL from Methanococcoides burtonii (strain DSM 6242 / NBRC 107633 / OCM 468 / ACE-M).